The sequence spans 219 residues: OVARIAN TUMOR DOMAIN-containing deubiquitinating enzyme 12 (219 aa).

An OTU domain is found at 79 to 203 (LCELKVSGDG…EVHYNSLYDI (125 aa)). Residue Asp-87 is part of the active site. Cys-90 (nucleophile) is an active-site residue. The active site involves His-196.

Belongs to the peptidase C85 family.

The catalysed reaction is Thiol-dependent hydrolysis of ester, thioester, amide, peptide and isopeptide bonds formed by the C-terminal Gly of ubiquitin (a 76-residue protein attached to proteins as an intracellular targeting signal).. In terms of biological role, hydrolase that can remove conjugated ubiquitin from proteins in vitro and may therefore play an important regulatory role at the level of protein turnover by preventing degradation. Inactive cysteine protease. This chain is OVARIAN TUMOR DOMAIN-containing deubiquitinating enzyme 12, found in Arabidopsis thaliana (Mouse-ear cress).